Consider the following 397-residue polypeptide: Phosphoglycerate kinase (397 aa).

Substrate is bound by residues 25–27 (DLN), R41, 64–67 (HLGR), R118, and R151. Residues K202, E324, and 350–353 (GGDT) contribute to the ATP site.

The protein belongs to the phosphoglycerate kinase family. In terms of assembly, monomer.

It is found in the cytoplasm. It carries out the reaction (2R)-3-phosphoglycerate + ATP = (2R)-3-phospho-glyceroyl phosphate + ADP. The protein operates within carbohydrate degradation; glycolysis; pyruvate from D-glyceraldehyde 3-phosphate: step 2/5. The protein is Phosphoglycerate kinase of Albidiferax ferrireducens (strain ATCC BAA-621 / DSM 15236 / T118) (Rhodoferax ferrireducens).